We begin with the raw amino-acid sequence, 474 residues long: Stabilizer of axonemal microtubules 1 (474 aa).

Mn stretches follow at residues 30–64 (KPCL…KGSI), 65–97 (PMEG…PSEE), 98–131 (NMDL…PYSN), 132–165 (KMEY…PASV), 166–199 (RFDN…LCNI), 200–232 (PLED…PCEI), 233–266 (PFES…GLDM), 267–299 (PFSN…PPED), 300–332 (SMDL…RKSG), 333–366 (RFEG…FPTE), 367–400 (PLDC…RGNV), and 401–434 (PVEG…TFEE). The tract at residues 318–350 (PARSCRPAPQIRKSGRFEGSSTTKDDYKQWSSM) is disordered. Residues 444–474 (KPVSQAGSQQSSHLSVDDSENPSQRKLEVSA) form a disordered region. Residues 448 to 457 (QAGSQQSSHL) show a composition bias toward polar residues.

Belongs to the FAM154 family. As to quaternary structure, associates with microtubules via the Mn regions.

The protein resides in the cytoplasm. It localises to the cytoskeleton. The protein localises to the microtubule organizing center. Its subcellular location is the centrosome. It is found in the centriole. The protein resides in the cilium basal body. It localises to the cilium axoneme. The protein localises to the flagellum axoneme. Functionally, may play a role in the regulation of cilium length. Stabilizes microtubules at low temperature. This is Stabilizer of axonemal microtubules 1 (SAXO1) from Macaca fascicularis (Crab-eating macaque).